Here is a 320-residue protein sequence, read N- to C-terminus: Methionyl-tRNA formyltransferase (320 aa).

114–117 (SLLP) is a binding site for (6S)-5,6,7,8-tetrahydrofolate.

This sequence belongs to the Fmt family.

The catalysed reaction is L-methionyl-tRNA(fMet) + (6R)-10-formyltetrahydrofolate = N-formyl-L-methionyl-tRNA(fMet) + (6S)-5,6,7,8-tetrahydrofolate + H(+). Its function is as follows. Attaches a formyl group to the free amino group of methionyl-tRNA(fMet). The formyl group appears to play a dual role in the initiator identity of N-formylmethionyl-tRNA by promoting its recognition by IF2 and preventing the misappropriation of this tRNA by the elongation apparatus. In Acinetobacter baumannii (strain AB307-0294), this protein is Methionyl-tRNA formyltransferase.